Reading from the N-terminus, the 121-residue chain is MAKKKKINVPSGLIHVSCSPNNTIVSATDPSGNVLCWASSGTVGFKGFRKKTPYSAGVAADKVAKTVKEMGMGSVKMYLKGTGRGKDTTIRSFANAGITITEINEKTPIPHNGCKPPKRPR.

It belongs to the universal ribosomal protein uS11 family. Part of the 30S ribosomal subunit. Interacts with proteins S7 and S18. Binds to IF-3.

Its function is as follows. Located on the platform of the 30S subunit, it bridges several disparate RNA helices of the 16S rRNA. Forms part of the Shine-Dalgarno cleft in the 70S ribosome. In Mycoplasma genitalium (strain ATCC 33530 / DSM 19775 / NCTC 10195 / G37) (Mycoplasmoides genitalium), this protein is Small ribosomal subunit protein uS11.